A 213-amino-acid chain; its full sequence is Adenylate kinase (213 aa).

ATP is bound at residue 10-15 (GAGKGT). An NMP region spans residues 30–59 (AVGDIFRTIIKTSTSEAELINNYVKQGALI). AMP is bound by residues Arg-36, 57 to 59 (ALI), 85 to 88 (GYPR), and Gln-92. Residues 123 to 161 (GRYSCKNCGKIYNVHFLQPKTDYVCDVCSSNVFDYRRDD) are LID. An ATP-binding site is contributed by Arg-124. Zn(2+) contacts are provided by Cys-127 and Cys-130. Position 133–134 (133–134 (IY)) interacts with ATP. Residues Cys-147 and Cys-150 each contribute to the Zn(2+) site. Residues Arg-158 and Arg-169 each contribute to the AMP site. Lys-197 serves as a coordination point for ATP.

Belongs to the adenylate kinase family. Monomer.

The protein localises to the cytoplasm. The catalysed reaction is AMP + ATP = 2 ADP. Its pathway is purine metabolism; AMP biosynthesis via salvage pathway; AMP from ADP: step 1/1. Its function is as follows. Catalyzes the reversible transfer of the terminal phosphate group between ATP and AMP. Plays an important role in cellular energy homeostasis and in adenine nucleotide metabolism. This chain is Adenylate kinase, found in Rickettsia typhi (strain ATCC VR-144 / Wilmington).